Reading from the N-terminus, the 179-residue chain is Bifunctional protein PyrR (179 aa).

A PRPP-binding motif is present at residues 99–111; that stretch reads VILVDDVLYTGRT.

The protein belongs to the purine/pyrimidine phosphoribosyltransferase family. PyrR subfamily. As to quaternary structure, homodimer and homohexamer; in equilibrium.

The enzyme catalyses UMP + diphosphate = 5-phospho-alpha-D-ribose 1-diphosphate + uracil. In terms of biological role, regulates transcriptional attenuation of the pyrimidine nucleotide (pyr) operon by binding in a uridine-dependent manner to specific sites on pyr mRNA. This disrupts an antiterminator hairpin in the RNA and favors formation of a downstream transcription terminator, leading to a reduced expression of downstream genes. Also displays a weak uracil phosphoribosyltransferase activity which is not physiologically significant. This Limosilactobacillus fermentum (strain NBRC 3956 / LMG 18251) (Lactobacillus fermentum) protein is Bifunctional protein PyrR.